Reading from the N-terminus, the 134-residue chain is Fatty acid-binding protein 5 (134 aa).

The Nuclear localization signal signature appears at 23–33; it reads KELGVGMAMRK. Residues Arg-109 and 129 to 131 each bind hexadecanoate; that span reads RVY. Residues Arg-109 and Tyr-131 each contribute to the N-eicosanoyl ethanolamine site. Residue 129–131 participates in (9Z,12Z)-octadecadienoate binding; that stretch reads RVY.

Belongs to the calycin superfamily. Fatty-acid binding protein (FABP) family. Monomer.

Its subcellular location is the cytoplasm. The protein resides in the nucleus. The protein localises to the synapse. It localises to the postsynaptic density. It is found in the secreted. It carries out the reaction hexadecanoate(out) = hexadecanoate(in). The catalysed reaction is (9Z,12Z)-octadecadienoate(out) = (9Z,12Z)-octadecadienoate(in). The enzyme catalyses (9Z)-octadecenoate(out) = (9Z)-octadecenoate(in). In terms of biological role, intracellular carrier for long-chain fatty acids and related active lipids, such as endocannabinoids, that regulate the metabolism and actions of the ligands they bind. In addition to the cytosolic transport, selectively delivers specific fatty acids from the cytosol to the nucleus, wherein they activate nuclear receptors. Delivers retinoic acid to the nuclear receptor peroxisome proliferator-activated receptor delta; which promotes proliferation and survival. May also serve as a synaptic carrier of endocannabinoid at central synapses and thus controls retrograde endocannabinoid signaling. Modulates inflammation by regulating PTGES induction via NF-kappa-B activation, and prostaglandin E2 (PGE2) biosynthesis during inflammation. Has the highest binding affinity for docosahexaenoic acid (DHA) and decreasing relative affinity for eicosapentaenoic acid (EPA), alpha-linolenic acid (ALA), oleic acid, palmitic acid, linoleic acid and stearic acid, respectively. This chain is Fatty acid-binding protein 5, found in Pygoscelis papua (Gentoo penguin).